The following is a 196-amino-acid chain: Adenylate kinase (196 aa).

Residue 9 to 17 (GIPGVGKST) coordinates ATP.

Belongs to the archaeal adenylate kinase family.

It is found in the cytoplasm. It carries out the reaction AMP + ATP = 2 ADP. In Pyrococcus furiosus (strain ATCC 43587 / DSM 3638 / JCM 8422 / Vc1), this protein is Adenylate kinase.